Reading from the N-terminus, the 380-residue chain is Guanine nucleotide-binding protein subunit beta (380 aa).

WD repeat units follow at residues 64–103 (GHSG…KTHA), 106–145 (LHCP…DRDG), 155–195 (GHKG…RISI), 203–243 (GHTA…RAVR), 247–286 (GHEG…QLQV), 296–335 (NELP…VVLN), and 342–380 (SHEG…RKIV).

The protein belongs to the WD repeat G protein beta family. As to quaternary structure, g proteins are composed of 3 units, alpha, beta and gamma. Interacts with the gamma subunits RGG1 and RGG2.

It localises to the cell membrane. Functionally, guanine nucleotide-binding proteins (G proteins) are involved as modulators or transducers in various transmembrane signaling systems. The beta and gamma chains are required for the GTPase activity, for replacement of GDP by GTP, and for G protein-effector interaction. The sequence is that of Guanine nucleotide-binding protein subunit beta from Oryza sativa subsp. indica (Rice).